A 931-amino-acid chain; its full sequence is Netrin receptor UNC5C (931 aa).

Residues 1–40 form the signal peptide; it reads MRKGLRATAARCGLGLGYLLQMLVLPALALLSASGTGSAA. The Extracellular segment spans residues 41-380; that stretch reads QDDDFFHELP…APDSDDVALY (340 aa). The 98-residue stretch at 62 to 159 folds into the Ig-like domain; sequence PHFLIEPEEA…AGTTKSRKAY (98 aa). Cystine bridges form between Cys83/Cys144, Cys95/Cys142, Cys188/Cys239, Cys272/Cys309, Cys276/Cys313, Cys287/Cys299, Cys328/Cys362, Cys332/Cys367, and Cys340/Cys352. The Ig-like C2-type domain maps to 161–256; it reads RIAYLRKTFE…KRKSTTATVI (96 aa). An N-linked (GlcNAc...) asparagine glycan is attached at Asn236. 2 TSP type-1 domains span residues 260–314 and 316–368; these read NGGW…TLCP and DGRW…GLCM. N-linked (GlcNAc...) asparagine glycosylation is present at Asn361. A helical membrane pass occupies residues 381-401; it reads VGIVIAVIVCLAISVVVALFV. At 402 to 931 the chain is on the cytoplasmic side; that stretch reads YRKNHRDFES…VVSLAAEGQY (530 aa). Residues 402–931 are required for netrin-mediated axon repulsion of neuronal growth cones; that stretch reads YRKNHRDFES…VVSLAAEGQY (530 aa). Ser502 carries the phosphoserine modification. Residues 530 to 673 enclose the ZU5 domain; it reads CTAFGSFNSL…LSTYALVGHS (144 aa). A Phosphotyrosine modification is found at Tyr568. The segment at 694–712 is interaction with DCC; sequence SLEYSIRVYCLDDTQDALK. The 80-residue stretch at 850-929 folds into the Death domain; sequence QKLCSSLDAP…ETVVSLAAEG (80 aa).

This sequence belongs to the unc-5 family. As to quaternary structure, interacts with DCC (via cytoplasmic domain). Interacts (tyrosine phosphorylated form) with PTPN11. Interacts (via extracellular domain) with FLRT3 (via extracellular domain). Interacts (via Ig-like C2-type domain) with DSCAM (via extracellular domain). Interacts (via death domain) with DAPK1. Interacts (via cytoplasmic domain) with TUBB3; this interaction is decreased by NTN1/Netrin-1. Post-translationally, proteolytically cleaved by caspases during apoptosis. The cleavage does not take place when the receptor is associated with netrin ligand. Its cleavage by caspases is required to induce apoptosis. Phosphorylated on different cytoplasmic tyrosine residues. Phosphorylation of Tyr-568 leads to an interaction with PTPN11 phosphatase, suggesting that its activity is regulated by phosphorylation/dephosphorylation. Tyrosine phosphorylation is netrin-dependent. In terms of tissue distribution, mainly expressed in brain. Expressed in temporal lobe cortical neurons and in neurons of the hippocampal pyramidal layer. Also expressed in kidney. Not expressed in developing or adult lung.

It is found in the cell membrane. It localises to the cell surface. Its subcellular location is the synapse. The protein resides in the synaptosome. The protein localises to the cell projection. It is found in the axon. It localises to the dendrite. Its subcellular location is the growth cone. The protein resides in the lamellipodium. The protein localises to the filopodium. Receptor for netrin required for axon guidance. Mediates axon repulsion of neuronal growth cones in the developing nervous system upon ligand binding. NTN1/Netrin-1 binding might cause dissociation of UNC5C from polymerized TUBB3 in microtubules and thereby lead to increased microtubule dynamics and axon repulsion. Axon repulsion in growth cones may also be caused by its association with DCC that may trigger signaling for repulsion. Might also collaborate with DSCAM in NTN1-mediated axon repulsion independently of DCC. Also involved in corticospinal tract axon guidance independently of DCC. Involved in dorsal root ganglion axon projection towards the spinal cord. It also acts as a dependence receptor required for apoptosis induction when not associated with netrin ligand. The sequence is that of Netrin receptor UNC5C (UNC5C) from Homo sapiens (Human).